The sequence spans 273 residues: Pantothenate synthetase (273 aa).

Residue 27–34 (MGALHDGH) participates in ATP binding. The Proton donor role is filled by H34. Q58 lines the (R)-pantoate pocket. Q58 lines the beta-alanine pocket. 144 to 147 (GKKD) serves as a coordination point for ATP. A (R)-pantoate-binding site is contributed by Q150. ATP contacts are provided by residues V173 and 181-184 (LSSR).

The protein belongs to the pantothenate synthetase family. In terms of assembly, homodimer.

Its subcellular location is the cytoplasm. It carries out the reaction (R)-pantoate + beta-alanine + ATP = (R)-pantothenate + AMP + diphosphate + H(+). It functions in the pathway cofactor biosynthesis; (R)-pantothenate biosynthesis; (R)-pantothenate from (R)-pantoate and beta-alanine: step 1/1. Catalyzes the condensation of pantoate with beta-alanine in an ATP-dependent reaction via a pantoyl-adenylate intermediate. In Campylobacter curvus (strain 525.92), this protein is Pantothenate synthetase.